The following is a 319-amino-acid chain: Acetyl-coenzyme A carboxylase carboxyl transferase subunit alpha (319 aa).

Residues 38–293 (HALQDKLRLR…KAVLLNELDA (256 aa)) form the CoA carboxyltransferase C-terminal domain.

It belongs to the AccA family. Acetyl-CoA carboxylase is a heterohexamer composed of biotin carboxyl carrier protein (AccB), biotin carboxylase (AccC) and two subunits each of ACCase subunit alpha (AccA) and ACCase subunit beta (AccD).

The protein localises to the cytoplasm. It catalyses the reaction N(6)-carboxybiotinyl-L-lysyl-[protein] + acetyl-CoA = N(6)-biotinyl-L-lysyl-[protein] + malonyl-CoA. It functions in the pathway lipid metabolism; malonyl-CoA biosynthesis; malonyl-CoA from acetyl-CoA: step 1/1. Its function is as follows. Component of the acetyl coenzyme A carboxylase (ACC) complex. First, biotin carboxylase catalyzes the carboxylation of biotin on its carrier protein (BCCP) and then the CO(2) group is transferred by the carboxyltransferase to acetyl-CoA to form malonyl-CoA. The protein is Acetyl-coenzyme A carboxylase carboxyl transferase subunit alpha of Stenotrophomonas maltophilia (strain R551-3).